The primary structure comprises 156 residues: MTNTATSVELDLQVAVEGVELPSVQEMELWVKTALRDSMDQAELTIRIVDVAESQMLNSTYRGKDKPTNVLSFPFEAPPGIELPLLGDLVVCAAVVKQEAIDQNKPLNAHWAHMVVHGCLHLLGYDHIEDIEAEEMESLETQLIESLGYNNPYQEQ.

Histidine 117, histidine 121, and histidine 127 together coordinate Zn(2+).

This sequence belongs to the endoribonuclease YbeY family. Requires Zn(2+) as cofactor.

Its subcellular location is the cytoplasm. Its function is as follows. Single strand-specific metallo-endoribonuclease involved in late-stage 70S ribosome quality control and in maturation of the 3' terminus of the 16S rRNA. The protein is Endoribonuclease YbeY of Shewanella piezotolerans (strain WP3 / JCM 13877).